The primary structure comprises 847 residues: DNA mismatch repair protein MutS (847 aa).

Residue 603–610 (GPNMSGKS) participates in ATP binding.

It belongs to the DNA mismatch repair MutS family.

Functionally, this protein is involved in the repair of mismatches in DNA. It is possible that it carries out the mismatch recognition step. This protein has a weak ATPase activity. This Streptococcus suis (strain 98HAH33) protein is DNA mismatch repair protein MutS.